The sequence spans 291 residues: Elongation factor Ts (291 aa).

Residues 79-82 (TDFV) are involved in Mg(2+) ion dislocation from EF-Tu.

The protein belongs to the EF-Ts family.

The protein localises to the cytoplasm. Associates with the EF-Tu.GDP complex and induces the exchange of GDP to GTP. It remains bound to the aminoacyl-tRNA.EF-Tu.GTP complex up to the GTP hydrolysis stage on the ribosome. The sequence is that of Elongation factor Ts from Leuconostoc mesenteroides subsp. mesenteroides (strain ATCC 8293 / DSM 20343 / BCRC 11652 / CCM 1803 / JCM 6124 / NCDO 523 / NBRC 100496 / NCIMB 8023 / NCTC 12954 / NRRL B-1118 / 37Y).